Consider the following 44-residue polypeptide: Homeobox protein DLX-1 (44 aa).

The disordered stretch occupies residues 19–44 (RALSAGSPPVPPGWNRIPPLGRAQEE).

Belongs to the distal-less homeobox family. In terms of assembly, interacts with SMAD4 (via homeobox DNA-binding domain). Interacts (via homeobox DNA-binding domain) with POU4F2; this interaction suppresses DLX1-mediated transcriptional activity in postnatal retina and enhances retinal ganglion cell (RGC) differentiation.

The protein resides in the nucleus. In terms of biological role, plays a role as a transcriptional activator or repressor. Inhibits several cytokine signaling pathways, such as TGFB1, activin-A/INHBA and BMP4 by interfering with the transcriptional stimulatory activity of transcription factors, such as MSX2, FAST2, SMAD2 and SMAD3 during hematopoietic cell differentiation. Plays a role in terminal differentiation of interneurons, such as amacrine and bipolar cells in the developing retina. Likely to play a regulatory role in the development of the ventral forebrain. May play a role in craniofacial patterning and morphogenesis and may be involved in the early development of diencephalic subdivisions. The chain is Homeobox protein DLX-1 (Dlx1) from Rattus norvegicus (Rat).